Consider the following 60-residue polypeptide: Large ribosomal subunit protein uL30 (60 aa).

This sequence belongs to the universal ribosomal protein uL30 family. Part of the 50S ribosomal subunit.

The sequence is that of Large ribosomal subunit protein uL30 from Kineococcus radiotolerans (strain ATCC BAA-149 / DSM 14245 / SRS30216).